Consider the following 262-residue polypeptide: Chemotaxis protein methyltransferase (262 aa).

In terms of domain architecture, CheR-type methyltransferase spans 1-262 (MEKKITPSEL…SPRGVYYEKV (262 aa)). Residues Thr-76, Arg-80, Glu-111, Asp-133, 188-189 (NV), and 206-207 (RN) contribute to the S-adenosyl-L-methionine site.

It carries out the reaction L-glutamyl-[protein] + S-adenosyl-L-methionine = [protein]-L-glutamate 5-O-methyl ester + S-adenosyl-L-homocysteine. Its function is as follows. Methylation of the membrane-bound methyl-accepting chemotaxis proteins (MCP) to form gamma-glutamyl methyl ester residues in MCP. The chain is Chemotaxis protein methyltransferase (cheR) from Campylobacter jejuni subsp. jejuni serotype O:2 (strain ATCC 700819 / NCTC 11168).